We begin with the raw amino-acid sequence, 383 residues long: S-adenosylmethionine synthase 1 (383 aa).

Residue His15 participates in ATP binding. Asp17 lines the Mg(2+) pocket. A K(+)-binding site is contributed by Glu43. L-methionine contacts are provided by Glu56 and Gln99. The tract at residues 99–109 (QSPDINLGVSR) is flexible loop. ATP is bound by residues 162–164 (DGK), 228–229 (RF), Asp237, 243–244 (RK), Ala260, and Lys264. Asp237 lines the L-methionine pocket. Lys268 is an L-methionine binding site.

This sequence belongs to the AdoMet synthase family. Homotetramer; dimer of dimers. The cofactor is Mg(2+). K(+) is required as a cofactor.

It localises to the cytoplasm. The catalysed reaction is L-methionine + ATP + H2O = S-adenosyl-L-methionine + phosphate + diphosphate. It functions in the pathway amino-acid biosynthesis; S-adenosyl-L-methionine biosynthesis; S-adenosyl-L-methionine from L-methionine: step 1/1. Functionally, catalyzes the formation of S-adenosylmethionine (AdoMet) from methionine and ATP. The overall synthetic reaction is composed of two sequential steps, AdoMet formation and the subsequent tripolyphosphate hydrolysis which occurs prior to release of AdoMet from the enzyme. The polypeptide is S-adenosylmethionine synthase 1 (Rhodopseudomonas palustris (strain BisB18)).